A 90-amino-acid polypeptide reads, in one-letter code: Probable Fe(2+)-trafficking protein (90 aa).

It belongs to the Fe(2+)-trafficking protein family.

Could be a mediator in iron transactions between iron acquisition and iron-requiring processes, such as synthesis and/or repair of Fe-S clusters in biosynthetic enzymes. The chain is Probable Fe(2+)-trafficking protein from Nitrosomonas eutropha (strain DSM 101675 / C91 / Nm57).